A 91-amino-acid chain; its full sequence is Small ribosomal subunit protein uS17 (91 aa).

It belongs to the universal ribosomal protein uS17 family. Part of the 30S ribosomal subunit.

One of the primary rRNA binding proteins, it binds specifically to the 5'-end of 16S ribosomal RNA. The polypeptide is Small ribosomal subunit protein uS17 (Saccharopolyspora erythraea (strain ATCC 11635 / DSM 40517 / JCM 4748 / NBRC 13426 / NCIMB 8594 / NRRL 2338)).